The primary structure comprises 513 residues: Anthranilate synthase component 1 (513 aa).

Residues Ser50 and 279-281 (PYM) each bind L-tryptophan. 314-315 (GT) provides a ligand contact to chorismate. Mg(2+) is bound at residue Glu341. Chorismate-binding positions include Tyr429, Arg449, 463 to 465 (GAG), and Gly465. Position 478 (Glu478) interacts with Mg(2+).

It belongs to the anthranilate synthase component I family. Heterotetramer consisting of two non-identical subunits: a beta subunit (TrpG) and a large alpha subunit (TrpE). Mg(2+) serves as cofactor.

It catalyses the reaction chorismate + L-glutamine = anthranilate + pyruvate + L-glutamate + H(+). The protein operates within amino-acid biosynthesis; L-tryptophan biosynthesis; L-tryptophan from chorismate: step 1/5. Its activity is regulated as follows. Feedback inhibited by tryptophan. Functionally, part of a heterotetrameric complex that catalyzes the two-step biosynthesis of anthranilate, an intermediate in the biosynthesis of L-tryptophan. In the first step, the glutamine-binding beta subunit (TrpG) of anthranilate synthase (AS) provides the glutamine amidotransferase activity which generates ammonia as a substrate that, along with chorismate, is used in the second step, catalyzed by the large alpha subunit of AS (TrpE) to produce anthranilate. In the absence of TrpG, TrpE can synthesize anthranilate directly from chorismate and high concentrations of ammonia. The sequence is that of Anthranilate synthase component 1 (trpE) from Bacillus pumilus (Bacillus mesentericus).